The following is a 301-amino-acid chain: Acetylglutamate kinase (301 aa).

Substrate-binding positions include 68–69 (GG), Arg90, and Asn195.

The protein belongs to the acetylglutamate kinase family. ArgB subfamily.

It is found in the cytoplasm. It catalyses the reaction N-acetyl-L-glutamate + ATP = N-acetyl-L-glutamyl 5-phosphate + ADP. The protein operates within amino-acid biosynthesis; L-arginine biosynthesis; N(2)-acetyl-L-ornithine from L-glutamate: step 2/4. In terms of biological role, catalyzes the ATP-dependent phosphorylation of N-acetyl-L-glutamate. The protein is Acetylglutamate kinase of Pseudomonas paraeruginosa (strain DSM 24068 / PA7) (Pseudomonas aeruginosa (strain PA7)).